We begin with the raw amino-acid sequence, 510 residues long: Pantetheinase (510 aa).

The N-terminal stretch at 1–22 (MIMSQLLNYVAVLFFCVSRASS) is a signal peptide. The CN hydrolase domain maps to 31 to 307 (YEHAVILPNA…GKLLLAQLDS (277 aa)). A glycan (N-linked (GlcNAc...) asparagine) is linked at asparagine 39. Glutamate 80 (proton acceptor) is an active-site residue. Residues asparagine 87 and asparagine 147 are each glycosylated (N-linked (GlcNAc...) asparagine). Lysine 179 serves as the catalytic Proton donor. Asparagine 201 carries N-linked (GlcNAc...) asparagine glycosylation. The active-site Nucleophile is cysteine 212. Asparagine 316 and asparagine 354 each carry an N-linked (GlcNAc...) asparagine glycan. Aspartate 492 carries the GPI-anchor amidated aspartate lipid modification. A propeptide spans 493–510 (LTTQALRLNPKTDAWKSK) (removed in mature form). O-linked (GalNAc...) threonine glycosylation is present at threonine 504.

This sequence belongs to the carbon-nitrogen hydrolase superfamily. BTD/VNN family. In terms of assembly, monomer.

It is found in the cell membrane. The catalysed reaction is (R)-pantetheine + H2O = cysteamine + (R)-pantothenate. In terms of biological role, amidohydrolase that hydrolyzes specifically one of the carboamide linkages in D-pantetheine thus recycling pantothenic acid (vitamin B5) and releasing cysteamine. The sequence is that of Pantetheinase (VNN1) from Bos taurus (Bovine).